The chain runs to 297 residues: Homoserine kinase (297 aa).

82-92 (PLTRGLGSSAS) serves as a coordination point for ATP.

Belongs to the GHMP kinase family. Homoserine kinase subfamily.

The protein resides in the cytoplasm. The catalysed reaction is L-homoserine + ATP = O-phospho-L-homoserine + ADP + H(+). It functions in the pathway amino-acid biosynthesis; L-threonine biosynthesis; L-threonine from L-aspartate: step 4/5. Functionally, catalyzes the ATP-dependent phosphorylation of L-homoserine to L-homoserine phosphate. The protein is Homoserine kinase of Bacillus cereus (strain ATCC 10987 / NRS 248).